A 509-amino-acid polypeptide reads, in one-letter code: ATP synthase subunit alpha (509 aa).

169 to 176 (GDRQTGKT) provides a ligand contact to ATP.

This sequence belongs to the ATPase alpha/beta chains family. As to quaternary structure, F-type ATPases have 2 components, CF(1) - the catalytic core - and CF(0) - the membrane proton channel. CF(1) has five subunits: alpha(3), beta(3), gamma(1), delta(1), epsilon(1). CF(0) has three main subunits: a(1), b(2) and c(9-12). The alpha and beta chains form an alternating ring which encloses part of the gamma chain. CF(1) is attached to CF(0) by a central stalk formed by the gamma and epsilon chains, while a peripheral stalk is formed by the delta and b chains.

The protein resides in the cell inner membrane. It carries out the reaction ATP + H2O + 4 H(+)(in) = ADP + phosphate + 5 H(+)(out). Its function is as follows. Produces ATP from ADP in the presence of a proton gradient across the membrane. The alpha chain is a regulatory subunit. The polypeptide is ATP synthase subunit alpha (Mesorhizobium japonicum (strain LMG 29417 / CECT 9101 / MAFF 303099) (Mesorhizobium loti (strain MAFF 303099))).